We begin with the raw amino-acid sequence, 160 residues long: Cytochrome b6-f complex subunit 4 (160 aa).

Helical transmembrane passes span 36–56 (LLYI…GLAV), 95–115 (LLGI…PFIE), and 131–151 (AFFL…CLPI).

Belongs to the cytochrome b family. PetD subfamily. In terms of assembly, the 4 large subunits of the cytochrome b6-f complex are cytochrome b6, subunit IV (17 kDa polypeptide, PetD), cytochrome f and the Rieske protein, while the 4 small subunits are PetG, PetL, PetM and PetN. The complex functions as a dimer.

Its subcellular location is the cellular thylakoid membrane. Functionally, component of the cytochrome b6-f complex, which mediates electron transfer between photosystem II (PSII) and photosystem I (PSI), cyclic electron flow around PSI, and state transitions. This chain is Cytochrome b6-f complex subunit 4, found in Prochlorococcus marinus (strain SARG / CCMP1375 / SS120).